Here is a 376-residue protein sequence, read N- to C-terminus: Formate dehydrogenase 1 (376 aa).

2 residues coordinate substrate: Val-97 and Asn-121. NAD(+) is bound by residues 176-177, Asp-197, 244-248, Thr-270, Asp-296, and 325-328; these read RI, PLHKD, and HISG.

The protein belongs to the D-isomer specific 2-hydroxyacid dehydrogenase family. FDH subfamily. As to quaternary structure, homodimer.

It is found in the cytoplasm. The catalysed reaction is formate + NAD(+) = CO2 + NADH. Catalyzes the NAD(+)-dependent oxidation of formate to carbon dioxide. Formate oxidation is the final step in the methanol oxidation pathway in methylotrophic microorganisms. Has a role in the detoxification of exogenous formate in non-methylotrophic organisms. The sequence is that of Formate dehydrogenase 1 (FDH1) from Saccharomyces cerevisiae (strain YJM789) (Baker's yeast).